Consider the following 236-residue polypeptide: Small ribosomal subunit protein uS2c (236 aa).

It belongs to the universal ribosomal protein uS2 family.

Its subcellular location is the plastid. The protein localises to the chloroplast. This chain is Small ribosomal subunit protein uS2c (rps2), found in Phaseolus vulgaris (Kidney bean).